Consider the following 528-residue polypeptide: Phenylalanine--tRNA ligase alpha subunit (528 aa).

L-phenylalanine is bound by residues T365 and F444. E446 lines the Mg(2+) pocket. F469 is a binding site for L-phenylalanine.

This sequence belongs to the class-II aminoacyl-tRNA synthetase family. Phe-tRNA synthetase alpha subunit type 2 subfamily. As to quaternary structure, tetramer of two alpha and two beta subunits. Mg(2+) serves as cofactor.

It is found in the cytoplasm. The catalysed reaction is tRNA(Phe) + L-phenylalanine + ATP = L-phenylalanyl-tRNA(Phe) + AMP + diphosphate + H(+). The chain is Phenylalanine--tRNA ligase alpha subunit from Borreliella burgdorferi (strain ATCC 35210 / DSM 4680 / CIP 102532 / B31) (Borrelia burgdorferi).